Consider the following 145-residue polypeptide: Functional amyloid chaperone FapA (145 aa).

The first 27 residues, 1–27 (MRKRDKRLYHLLLVGCVLGSLSLTAQA), serve as a signal peptide directing secretion.

This sequence belongs to the FapA family. As to quaternary structure, monomer in solution. Interacts with FapC but not FapB in vitro.

It is found in the periplasm. In terms of biological role, an intrinsically disordered chaperone for fibril amyloid FapC that guards against fibrillation, pro within the periplasm. Upon overexpression of the endogenous six-gene locus (fapA-fapF), cells form large clumps during liquid growth, make large amounts of biofilm and produce relatively unstable amyloid fibrils. This is Functional amyloid chaperone FapA from Pseudomonas putida (strain ATCC 700007 / DSM 6899 / JCM 31910 / BCRC 17059 / LMG 24140 / F1).